We begin with the raw amino-acid sequence, 267 residues long: NAD kinase 1 (267 aa).

The active-site Proton acceptor is the D45. NAD(+) contacts are provided by residues 45–46, 122–123, R149, D151, and A186; these read DG and NE.

It belongs to the NAD kinase family. Requires a divalent metal cation as cofactor.

The protein localises to the cytoplasm. It carries out the reaction NAD(+) + ATP = ADP + NADP(+) + H(+). In terms of biological role, involved in the regulation of the intracellular balance of NAD and NADP, and is a key enzyme in the biosynthesis of NADP. Catalyzes specifically the phosphorylation on 2'-hydroxyl of the adenosine moiety of NAD to yield NADP. This Oceanobacillus iheyensis (strain DSM 14371 / CIP 107618 / JCM 11309 / KCTC 3954 / HTE831) protein is NAD kinase 1.